The primary structure comprises 147 residues: Peptide deformylase (147 aa).

Residues Cys88 and His130 each coordinate Fe cation. Residue Glu131 is part of the active site. His134 contributes to the Fe cation binding site.

The protein belongs to the polypeptide deformylase family. It depends on Fe(2+) as a cofactor.

It carries out the reaction N-terminal N-formyl-L-methionyl-[peptide] + H2O = N-terminal L-methionyl-[peptide] + formate. Removes the formyl group from the N-terminal Met of newly synthesized proteins. Requires at least a dipeptide for an efficient rate of reaction. N-terminal L-methionine is a prerequisite for activity but the enzyme has broad specificity at other positions. This is Peptide deformylase from Alkaliphilus metalliredigens (strain QYMF).